A 469-amino-acid chain; its full sequence is Carboxypeptidase Q (469 aa).

The N-terminal stretch at 1 to 19 (MKTLILTLLSLYELQLCCG) is a signal peptide. Positions 20 to 42 (AYNQNIRSQRKFEMIKTEISSYK) are excised as a propeptide. Asparagine 59 and asparagine 159 each carry an N-linked (GlcNAc...) asparagine glycan. Zn(2+) is bound by residues histidine 288 and aspartate 300. Glutamate 334 (nucleophile) is an active-site residue. Glutamate 335 contacts Zn(2+). Asparagine 351 carries N-linked (GlcNAc...) asparagine glycosylation. Aspartate 362 lines the Zn(2+) pocket. Asparagine 394 is a glycosylation site (N-linked (GlcNAc...) asparagine). Histidine 432 lines the Zn(2+) pocket.

Belongs to the peptidase M28 family. Homodimer. The monomeric form is inactive while the homodimer is active.

It is found in the endoplasmic reticulum. It localises to the golgi apparatus. The protein resides in the lysosome. Its subcellular location is the secreted. In terms of biological role, carboxypeptidase that may play an important role in the hydrolysis of circulating peptides. Catalyzes more efficiently the hydrolysis of dipeptides with unsubstituted terminals into amino acids. This chain is Carboxypeptidase Q (cpq), found in Xenopus laevis (African clawed frog).